Here is a 555-residue protein sequence, read N- to C-terminus: Glypican-6 (555 aa).

An N-terminal signal peptide occupies residues 1–23 (MPSWIRAVILPLSGLLLTLPAAA). A compositionally biased stretch (low complexity) spans 348–357 (PALRSARSAP). Disordered regions lie at residues 348 to 376 (PALR…PTTA) and 480 to 501 (GNDV…GSGC). A lipid anchor (GPI-anchor amidated serine) is attached at S530. The propeptide at 531-555 (ASKFSSSLISWSLVCMVLALQRLYR) is removed in mature form.

The protein belongs to the glypican family. In terms of tissue distribution, in the cartilage growth-plate, gradient of expression with highest levels from the proliferative and pre-hypertrophic zones to lowest, if any, in the hypertrophic zones (at protein level).

The protein localises to the cell membrane. Its subcellular location is the secreted. It localises to the extracellular space. Its function is as follows. Cell surface proteoglycan that bears heparan sulfate. Putative cell surface coreceptor for growth factors, extracellular matrix proteins, proteases and anti-proteases. Enhances migration and invasion of cancer cells through WNT5A signaling. The chain is Glypican-6 (Gpc6) from Mus musculus (Mouse).